Here is a 98-residue protein sequence, read N- to C-terminus: uncharacterized protein (98 aa).

A helical membrane pass occupies residues 10-30 (LYGFFAVTGVLIASFIIGEIV).

The protein localises to the host membrane. This is an uncharacterized protein from Saccharolobus islandicus (Sulfolobus islandicus).